The following is a 289-amino-acid chain: 18S rRNA (guanine-N(7))-methyltransferase RID2 (289 aa).

Residues Lys215–Phe289 form a disordered region. Residues Asp219 to Gly237 show a composition bias toward acidic residues. Over residues Arg243 to Val254 the composition is skewed to basic residues. Residues Lys255–Lys264 are compositionally biased toward basic and acidic residues. The Nuclear localization signal motif lies at Arg268–Pro275.

Belongs to the class I-like SAM-binding methyltransferase superfamily. BUD23/WBSCR22 family. Expressed in seedlings, roots and flowers.

The protein localises to the nucleus. It localises to the nucleoplasm. It is found in the cytoplasm. The protein resides in the perinuclear region. Its subcellular location is the nucleolus. It carries out the reaction guanosine(1575) in yeast 18S rRNA + S-adenosyl-L-methionine = N(7)-methylguanosine(1575) in yeast 18S rRNA + S-adenosyl-L-homocysteine. Its function is as follows. Essential protein. S-adenosyl-L-methionine-dependent methyltransferase that specifically methylates the N(7) position of a guanine in 18S rRNA. Requires the methyltransferase adapter protein TRM112 for full rRNA methyltransferase activity. Important for biogenesis end export of the 40S ribosomal subunit independent on its methyltransferase activity. Involved in the pre-rRNA processing steps in the nucleolus leading to small-subunit rRNA production independently of its RNA-modifying catalytic activity. Supports cell proliferation. Required for the initiation of lateral root primordia formation and for the root apical meristem (RAM) organization as well as for leaves development. During callus formation from hypocotyl and root explants, required for the initial stage of reactivation of cell proliferation in the hypocotyl stele. Involved in leaf polarity establishment by functioning cooperatively with AS2 to repress abaxial genes ARF3, ARF4, KAN1, KAN2, YAB1 and YAB5, and the knox homeobox genes KNAT1, KNAT2, KNAT6, and STM to promote adaxial development in leaf primordia at shoot apical meristems at high temperatures. The polypeptide is 18S rRNA (guanine-N(7))-methyltransferase RID2 (Arabidopsis thaliana (Mouse-ear cress)).